The primary structure comprises 393 residues: Protein TsgA (393 aa).

The next 12 helical transmembrane spans lie at 11-31 (WISFLSYALTGALVIVTGMVM), 51-71 (FLNAGILISIFLNAWLMEIIP), 78-98 (FGFILMVLAVAGLMFSHSLAL), 101-121 (AAMFVLGLVSGITMSIGTFLI), 134-154 (LLFTDSFFSMAGMIFPMVAAF), 162-182 (WYWVYACIGLVYLAIFILTFG), 206-226 (IGVLFLAVAALCYILGQLGFI), 245-265 (ALVSDFWMSYMFGMWAFSFIL), 273-293 (ILTVLAGMAAVLMYLFITGTQ), 298-318 (WFILTLGFFSSAIYTSIITLG), 332-352 (FILTCGTIGTMLTFVVTGPIV), and 361-381 (LLTANGLYAVVFVMCFALGFV).

This sequence belongs to the major facilitator superfamily. TsgA family.

The protein resides in the cell inner membrane. This Salmonella paratyphi B (strain ATCC BAA-1250 / SPB7) protein is Protein TsgA.